The following is a 1929-amino-acid chain: Myoferlin (1929 aa).

The disordered stretch occupies residues Met1–Thr53. Over residues Gly27–Asp36 the composition is skewed to acidic residues. C2 domains lie at Val62–Val179 and Glu218–Asp354. Ca(2+)-binding residues include Asp267, Asp275, Asp323, Asp325, and Asp331. A compositionally biased stretch (basic residues) spans Arg898–Asp907. A disordered region spans residues Arg898 to Leu918. C2 domains are found at residues Gly996–Tyr1124, Arg1159–Glu1283, Ile1408–Gly1527, and Gly1645–Ser1793. Ca(2+) is bound by residues Asp1028, Asp1034, Asp1090, and Asp1092. Asp1442, Asp1448, Asp1497, Asp1499, Asp1764, Ser1767, and Asp1770 together coordinate Ca(2+). The span at Asp1845–Pro1858 shows a compositional bias: basic and acidic residues. Residues Asp1845 to Pro1867 form a disordered region. A helical membrane pass occupies residues Trp1894–Tyr1914.

Belongs to the ferlin family. Ca(2+) is required as a cofactor.

The protein localises to the cell membrane. Its subcellular location is the nucleus membrane. It is found in the cytoplasmic vesicle membrane. Its function is as follows. May play a role in membrane regeneration and repair. In Xenopus tropicalis (Western clawed frog), this protein is Myoferlin (myof).